Consider the following 243-residue polypeptide: UPF0246 protein M28_Spy1772 (243 aa).

It belongs to the UPF0246 family.

This chain is UPF0246 protein M28_Spy1772, found in Streptococcus pyogenes serotype M28 (strain MGAS6180).